The chain runs to 171 residues: Small ribosomal subunit protein uS4 (171 aa).

The 65-residue stretch at 103–167 (RRLQTLVHKR…SPMKKQIEAA (65 aa)) folds into the S4 RNA-binding domain.

This sequence belongs to the universal ribosomal protein uS4 family. Part of the 30S ribosomal subunit. Contacts protein S5. The interaction surface between S4 and S5 is involved in control of translational fidelity.

In terms of biological role, one of the primary rRNA binding proteins, it binds directly to 16S rRNA where it nucleates assembly of the body of the 30S subunit. With S5 and S12 plays an important role in translational accuracy. This chain is Small ribosomal subunit protein uS4, found in Methanothermobacter thermautotrophicus (strain ATCC 29096 / DSM 1053 / JCM 10044 / NBRC 100330 / Delta H) (Methanobacterium thermoautotrophicum).